A 1126-amino-acid chain; its full sequence is Replication protein 1a (1126 aa).

The methyltransferase stretch occupies residues Ser69–Ile406. The Alphavirus-like MT domain maps to Val90 to Leu278. A (+)RNA virus helicase ATP-binding domain is found at Asp806 to Lys963. Residues Thr834–Thr1094 are ATP-dependent helicase. Gly838 to Thr845 is an ATP binding site. One can recognise a (+)RNA virus helicase C-terminal domain in the interval Leu964 to Asn1125.

Belongs to the bromoviridae replication protein 1a family. In terms of assembly, interacts with RNA-directed RNA polymerase 2a.

The protein resides in the host endoplasmic reticulum membrane. In terms of biological role, involved in the virus replication. Contains a helicase domain and a methyltransferase domain. The methyltransferase domain is probably involved in viral RNA capping. Involved in the formation of ER membrane spherular invaginations in which RNA replication complexes form. This chain is Replication protein 1a, found in Alfalfa mosaic virus (AMV).